An 872-amino-acid chain; its full sequence is Leucine-rich repeat-containing protein 66 (872 aa).

The chain crosses the membrane as a helical span at residues 4-24; the sequence is FYVRVTILVTGLCFVETVTTP. 2 N-linked (GlcNAc...) asparagine glycosylation sites follow: Asn-45 and Asn-108. LRR repeat units lie at residues 142–164, 165–186, 189–210, 213–234, and 239–259; these read RLQV…WKLK, SLRS…DFHG, QLES…AFKG, KLQV…VTIA, and HLEL…VNFQ. The interval 339–363 is disordered; sequence LRGMWPQSPVELRDSQDEQVTDRKD. Over residues 349–363 the composition is skewed to basic and acidic residues; it reads ELRDSQDEQVTDRKD. A helical membrane pass occupies residues 371–391; it reads LAICLSVFITFVVAFCLGAFA. The span at 467 to 483 shows a compositional bias: polar residues; the sequence is QMLGSNGTDPGHQQSPE. Disordered regions lie at residues 467–501, 560–579, 695–761, and 776–872; these read QMLG…VLPS, GTFP…SQPR, NYES…SQRI, and LISG…SKHW. Asn-472 carries N-linked (GlcNAc...) asparagine glycosylation. The segment covering 484 to 493 has biased composition (basic and acidic residues); it reads QLKDSNESRS. Ser-718 carries the post-translational modification Phosphoserine. 3 stretches are compositionally biased toward polar residues: residues 725 to 736, 746 to 760, and 785 to 805; these read SVENDGTSQPLP, SVTS…TSQR, and CETN…STWP. Ser-752 carries the post-translational modification Phosphoserine. The segment covering 831–841 has biased composition (basic and acidic residues); sequence VDWHYSLRDLE.

It is found in the membrane. The polypeptide is Leucine-rich repeat-containing protein 66 (Lrrc66) (Mus musculus (Mouse)).